Here is a 501-residue protein sequence, read N- to C-terminus: Pyruvate dehydrogenase protein X component, mitochondrial (501 aa).

A mitochondrion-targeting transit peptide spans 1-53 (MAASWRLHCNQPLLRYLLGFSSRRSLGLAQGAAAWPVDRGASWRWFHSTQLLQ). A Lipoyl-binding domain is found at 56 to 132 (PIKVLMPSLS…QLGSLIALMV (77 aa)). K97 is modified (N6-lipoyllysine). A disordered region spans residues 145–176 (KDVSAPPPVSKPPAPTQPSPQPQIPCPARKEH). Residues 149-169 (APPPVSKPPAPTQPSPQPQIP) are compositionally biased toward pro residues. A Peripheral subunit-binding (PSBD) domain is found at 183–220 (RLSPAARNILEKHSLDASQGTATGPRGIFTKEDALKLV). K194 carries the N6-acetyllysine modification. Residue S196 is modified to Phosphoserine. Positions 228–256 (ITESRPASAPPPSLSASVPPQATAGPSYP) are disordered. K394 carries the post-translational modification N6-succinyllysine.

It belongs to the 2-oxoacid dehydrogenase family. In terms of assembly, part of the inner core of the multimeric pyruvate dehydrogenase complex that is composed of about 48 DLAT and 12 PDHX molecules. This core binds multiple copies of pyruvate dehydrogenase (subunits PDH1A and PDHB, E1), dihydrolipoamide acetyltransferase (DLAT, E2) and lipoamide dehydrogenase (DLD, E3). Interacts with SIRT4. Interacts with DLD. Delipoylated at Lys-97 by SIRT4, delipoylation decreases the PHD complex activity.

The protein localises to the mitochondrion matrix. Required for anchoring dihydrolipoamide dehydrogenase (E3) to the dihydrolipoamide transacetylase (E2) core of the pyruvate dehydrogenase complexes of eukaryotes. This specific binding is essential for a functional PDH complex. This is Pyruvate dehydrogenase protein X component, mitochondrial (Pdhx) from Mus musculus (Mouse).